A 279-amino-acid chain; its full sequence is Large ribosomal subunit protein uL2 (279 aa).

Disordered regions lie at residues 1 to 59 (MGIR…GGHK) and 224 to 279 (VAMN…KNKR). Composition is skewed to basic residues over residues 50–59 (TTRHKGGGHK) and 269–279 (VRRRRTGKNKR).

It belongs to the universal ribosomal protein uL2 family. Part of the 50S ribosomal subunit. Forms a bridge to the 30S subunit in the 70S ribosome.

In terms of biological role, one of the primary rRNA binding proteins. Required for association of the 30S and 50S subunits to form the 70S ribosome, for tRNA binding and peptide bond formation. It has been suggested to have peptidyltransferase activity; this is somewhat controversial. Makes several contacts with the 16S rRNA in the 70S ribosome. The protein is Large ribosomal subunit protein uL2 of Arthrobacter sp. (strain FB24).